A 274-amino-acid chain; its full sequence is AIMKMDGSQQEENLEVISTGSLGLDLALGVGGLPRGRIVEIFGPESSGKTTLCLEAVAQCQKNGGVCAFVDAEHAFDPVYARKLGVKVEELYLSQPDTGEQALEICDTLVRSGGIDMVVVDSVAALVPKAEIEGDMGDSHVGLQARLMSQALRKLTGHIKKTNTLVVFINQIRMKIGVMFGSPETTTGGNALKFYSSVRLDIRRTGSIKKGEEVLGNETRVKVIKNKVAPPFRQAEFDILYGEGISWEGELIDIGVKNDIINKSGAWYSYNGAK.

43–50 (GPESSGKT) contributes to the ATP binding site.

This sequence belongs to the RecA family.

The protein resides in the cytoplasm. Functionally, can catalyze the hydrolysis of ATP in the presence of single-stranded DNA, the ATP-dependent uptake of single-stranded DNA by duplex DNA, and the ATP-dependent hybridization of homologous single-stranded DNAs. It interacts with LexA causing its activation and leading to its autocatalytic cleavage. The protein is Protein RecA of Neisseria polysaccharea.